Consider the following 182-residue polypeptide: Sec-independent protein translocase protein TatB (182 aa).

Residues 1-21 (MFDIGFSELLLVFVIGLIVLG) traverse the membrane as a helical segment. Disordered regions lie at residues 87-107 (QAAESMKRTYSANDPEQASDE) and 121-182 (TQHE…SDKP). Over residues 168 to 182 (AAPVVESSPSSSDKP) the composition is skewed to low complexity.

It belongs to the TatB family. The Tat system comprises two distinct complexes: a TatABC complex, containing multiple copies of TatA, TatB and TatC subunits, and a separate TatA complex, containing only TatA subunits. Substrates initially bind to the TatABC complex, which probably triggers association of the separate TatA complex to form the active translocon.

It is found in the cell inner membrane. Functionally, part of the twin-arginine translocation (Tat) system that transports large folded proteins containing a characteristic twin-arginine motif in their signal peptide across membranes. Together with TatC, TatB is part of a receptor directly interacting with Tat signal peptides. TatB may form an oligomeric binding site that transiently accommodates folded Tat precursor proteins before their translocation. The polypeptide is Sec-independent protein translocase protein TatB (Salmonella choleraesuis (strain SC-B67)).